Here is a 258-residue protein sequence, read N- to C-terminus: Synaptosomal-associated protein 29 (258 aa).

Residues 1–41 (MSAYPKSYNPFDDDGEDEGARPAPWRDARDLPDGPDAPADR) form a disordered region. A compositionally biased stretch (basic and acidic residues) spans 18–32 (EGARPAPWRDARDLP). Residues 76–107 (ASSEELARQRGVLERTEKMVDKMDQDLKISQK) are a coiled coil. 3 positions are modified to phosphoserine: Ser77, Ser78, and Ser114. Residues 127–190 (PVETPPEQNG…GSAVSTDAYP (64 aa)) form a disordered region. Thr130 and Thr137 each carry phosphothreonine. The segment covering 132 to 144 (PEQNGTLASQPNS) has biased composition (polar residues). 5 positions are modified to phosphoserine: Ser163, Ser182, Ser185, Ser204, and Ser210. The 63-residue stretch at 196-258 (QAYHQKIDSN…KSTERKVRQL (63 aa)) folds into the t-SNARE coiled-coil homology domain.

The protein belongs to the SNAP-25 family. In terms of assembly, forms a SNARE complex, composed of VAMP8, SNAP29 and STX17, involved in fusion of autophagosome with lysosome. Interacts with multiple syntaxins including STX6. Interacts with EIPR1. Interacts with STX17; this interaction is increased in the absence of TMEM39A.

It is found in the cytoplasm. Its subcellular location is the golgi apparatus membrane. The protein localises to the cytoplasmic vesicle. It localises to the autophagosome membrane. The protein resides in the cell projection. It is found in the cilium membrane. Functionally, SNAREs, soluble N-ethylmaleimide-sensitive factor-attachment protein receptors, are essential proteins for fusion of cellular membranes. SNAREs localized on opposing membranes assemble to form a trans-SNARE complex, an extended, parallel four alpha-helical bundle that drives membrane fusion. SNAP29 is a SNARE involved in autophagy through the direct control of autophagosome membrane fusion with the lysososome membrane. Also plays a role in ciliogenesis by regulating membrane fusions. This is Synaptosomal-associated protein 29 from Pongo abelii (Sumatran orangutan).